Consider the following 276-residue polypeptide: Octanoyltransferase LipM (276 aa).

In terms of domain architecture, BPL/LPL catalytic spans 33-247; sequence GELKPTLRFY…GFKDAFSLTF (215 aa). C150 functions as the Acyl-thioester intermediate in the catalytic mechanism.

Belongs to the octanoyltransferase LipM family. In terms of assembly, monomer.

It catalyses the reaction octanoyl-[ACP] + L-lysyl-[protein] = N(6)-octanoyl-L-lysyl-[protein] + holo-[ACP] + H(+). Its pathway is protein modification; protein lipoylation via endogenous pathway; protein N(6)-(lipoyl)lysine from octanoyl-[acyl-carrier-protein]. Catalyzes the transfer of endogenously produced octanoic acid from octanoyl-acyl-carrier-protein onto the lipoyl domain of GcvH, an intermediate carrier during protein lipoylation. The sequence is that of Octanoyltransferase LipM from Exiguobacterium sp. (strain ATCC BAA-1283 / AT1b).